The primary structure comprises 269 residues: Hydroxypyruvate/pyruvate aldolase (269 aa).

Catalysis depends on H48, which acts as the Proton acceptor. A divalent metal cation is bound by residues E152 and D178.

Belongs to the HpcH/HpaI aldolase family. Requires a divalent metal cation as cofactor.

The catalysed reaction is D-glyceraldehyde + pyruvate = 2-dehydro-3-deoxy-L-galactonate. In terms of biological role, aldolase which can catalyze in vitro the aldolisation reaction between hydroxypyruvate (HPA) or pyruvate (PA) and D-glyceraldehyde (D-GA). The condensation of pyruvate and D-glyceraldehyde produces 2-dehydro-3-deoxy-L-galactonate as the major product. Has weak activity with hydroxypyruvate and D-glyceraldehyde. The polypeptide is Hydroxypyruvate/pyruvate aldolase (Delftia acidovorans (strain DSM 14801 / SPH-1)).